Here is a 106-residue protein sequence, read N- to C-terminus: Thiosulfate sulfurtransferase GlpE (106 aa).

Residues 17–105 (QLPSVCLADI…WRHVYPYTAT (89 aa)) form the Rhodanese domain. The active-site Cysteine persulfide intermediate is Cys65.

It belongs to the GlpE family.

The protein resides in the cytoplasm. It carries out the reaction thiosulfate + hydrogen cyanide = thiocyanate + sulfite + 2 H(+). The enzyme catalyses thiosulfate + [thioredoxin]-dithiol = [thioredoxin]-disulfide + hydrogen sulfide + sulfite + 2 H(+). Its function is as follows. Transferase that catalyzes the transfer of sulfur from thiosulfate to thiophilic acceptors such as cyanide or dithiols. May function in a CysM-independent thiosulfate assimilation pathway by catalyzing the conversion of thiosulfate to sulfite, which can then be used for L-cysteine biosynthesis. This is Thiosulfate sulfurtransferase GlpE from Tolumonas auensis (strain DSM 9187 / NBRC 110442 / TA 4).